A 95-amino-acid chain; its full sequence is FMRFamide-like neuropeptides 16 (95 aa).

A signal peptide spans Met-1–Ala-24. Positions Ala-25–Ala-58 are excised as a propeptide. Phenylalanine amide is present on residues Phe-67, Phe-77, and Phe-87. The propeptide occupies Ser-90 to Gln-95.

It belongs to the FARP (FMRFamide related peptide) family.

The protein localises to the secreted. Functionally, FMRFamides and FMRFamide-like peptides are neuropeptides. AQTFVRF-amide inhibits the activity of dissected pharyngeal myogenic muscle system. The sequence is that of FMRFamide-like neuropeptides 16 (flp-16) from Caenorhabditis briggsae.